The primary structure comprises 418 residues: Voltage-gated ClC-type chloride channel ClcB (418 aa).

10 helical membrane-spanning segments follow: residues 5 to 25 (LLIATVVGILAAFAVAGFRHA), 54 to 74 (LLTPALGGLAAGLLLMGWQKF), 146 to 166 (LWIACGAAAGMAAAYRAPLAG), 168 to 188 (LFIAEVLFGTMMLASLGPVII), 222 to 242 (ALIISTGVLAGLCGPLLLTLM), 258 to 278 (WQLALGGLIVGLLSLFTPAVW), 291 to 311 (APPLLMIIAGIFLCKLFAVLA), 316 to 336 (GAPGGVFTPTLFIGLAIGMLY), 352 to 372 (LLLGLTGMATLLAATTHAPIM), and 380 to 400 (MTGEYQLLPGLLIACVIASVI).

The protein belongs to the chloride channel (TC 2.A.49) family. ClcB subfamily.

The protein localises to the cell inner membrane. In terms of biological role, probably acts as an electrical shunt for an outwardly-directed proton pump that is linked to amino acid decarboxylation, as part of the extreme acid resistance (XAR) response. The sequence is that of Voltage-gated ClC-type chloride channel ClcB from Escherichia coli (strain SMS-3-5 / SECEC).